We begin with the raw amino-acid sequence, 300 residues long: Ribosomal RNA small subunit methyltransferase H (300 aa).

Residues 35 to 37 (GGH), Asp-55, Phe-82, Asp-100, and Gln-107 each bind S-adenosyl-L-methionine.

Belongs to the methyltransferase superfamily. RsmH family.

It localises to the cytoplasm. It catalyses the reaction cytidine(1402) in 16S rRNA + S-adenosyl-L-methionine = N(4)-methylcytidine(1402) in 16S rRNA + S-adenosyl-L-homocysteine + H(+). Specifically methylates the N4 position of cytidine in position 1402 (C1402) of 16S rRNA. In Chlamydia trachomatis serovar L2 (strain ATCC VR-902B / DSM 19102 / 434/Bu), this protein is Ribosomal RNA small subunit methyltransferase H.